The primary structure comprises 290 residues: Inorganic pyrophosphatase (290 aa).

Position 81 (arginine 81) interacts with diphosphate. 3 residues coordinate Mg(2+): aspartate 118, aspartate 123, and aspartate 155.

It belongs to the PPase family. Requires Mg(2+) as cofactor.

It is found in the cytoplasm. The catalysed reaction is diphosphate + H2O = 2 phosphate + H(+). In Neurospora crassa (strain ATCC 24698 / 74-OR23-1A / CBS 708.71 / DSM 1257 / FGSC 987), this protein is Inorganic pyrophosphatase (ipp-1).